A 260-amino-acid chain; its full sequence is Phosphate import ATP-binding protein PstB 1 (260 aa).

In terms of domain architecture, ABC transporter spans 13-255; sequence VRVRDLNLWY…PHTKKAEDYI (243 aa). Residue 45–52 coordinates ATP; it reads GPSGCGKS.

The protein belongs to the ABC transporter superfamily. Phosphate importer (TC 3.A.1.7) family. In terms of assembly, the complex is composed of two ATP-binding proteins (PstB), two transmembrane proteins (PstC and PstA) and a solute-binding protein (PstS).

The protein localises to the cell inner membrane. The enzyme catalyses phosphate(out) + ATP + H2O = ADP + 2 phosphate(in) + H(+). Functionally, part of the ABC transporter complex PstSACB involved in phosphate import. Responsible for energy coupling to the transport system. In Chromohalobacter salexigens (strain ATCC BAA-138 / DSM 3043 / CIP 106854 / NCIMB 13768 / 1H11), this protein is Phosphate import ATP-binding protein PstB 1.